We begin with the raw amino-acid sequence, 117 residues long: uncharacterized protein (117 aa).

The helical transmembrane segment at 1–21 (MEIAIIALFIVSIALIAFSYS) threads the bilayer. The stretch at 38–67 (LSAMQEIYKLKKKMTVLEEELLETNLVIRK) forms a coiled coil.

It localises to the cell membrane. This is an uncharacterized protein from Bacillus subtilis (strain 168).